A 219-amino-acid chain; its full sequence is 7-cyano-7-deazaguanine synthase (219 aa).

11-21 (FSGGQDSTTCL) lines the ATP pocket. Zn(2+)-binding residues include C188, C196, C199, and C202.

Belongs to the QueC family. The cofactor is Zn(2+).

It carries out the reaction 7-carboxy-7-deazaguanine + NH4(+) + ATP = 7-cyano-7-deazaguanine + ADP + phosphate + H2O + H(+). It participates in purine metabolism; 7-cyano-7-deazaguanine biosynthesis. In terms of biological role, catalyzes the ATP-dependent conversion of 7-carboxy-7-deazaguanine (CDG) to 7-cyano-7-deazaguanine (preQ(0)). In Glaesserella parasuis serovar 5 (strain SH0165) (Haemophilus parasuis), this protein is 7-cyano-7-deazaguanine synthase.